Reading from the N-terminus, the 460-residue chain is Nuclear distribution protein PAC1 (460 aa).

A LisH domain is found at 9-41; sequence QAEELHKSIIAYLAANNLQDSANAMRTELGLGE. Positions 61–88 form a coiled coil; it reads TSVVRLQKKIMDLEAQTQTLQTELNSAT. Residues 82 to 92 are compositionally biased toward polar residues; it reads TELNSATPTSN. The tract at residues 82 to 105 is disordered; it reads TELNSATPTSNRRGDPSSWLPAGP. 7 WD repeats span residues 112–153, 155–195, 199–246, 249–288, 293–354, 355–394, and 399–456; these read SHRT…RTVK, HTKA…QNIR, GHDH…CVKT, GHAD…PEAK, GHEH…KTLI, GHDN…KCVK, and SHEH…MSLR. A disordered region spans residues 414–433; the sequence is IKDKGPGEETNGDVGTPKKA.

The protein belongs to the WD repeat LIS1/nudF family. Self-associates. Interacts with NDL1 and dynein.

The protein resides in the cytoplasm. Its subcellular location is the cytoskeleton. It localises to the spindle pole. Its function is as follows. Positively regulates the activity of the minus-end directed microtubule motor protein dynein. May enhance dynein-mediated microtubule sliding by targeting dynein to the microtubule plus end. Required for nuclear migration during vegetative growth as well as development. Required for retrograde early endosome (EE) transport from the hyphal tip. Required for localization of dynein to the mitotic spindle poles. Recruits additional proteins to the dynein complex at SPBs. This Gibberella zeae (strain ATCC MYA-4620 / CBS 123657 / FGSC 9075 / NRRL 31084 / PH-1) (Wheat head blight fungus) protein is Nuclear distribution protein PAC1.